An 84-amino-acid chain; its full sequence is Toxin Cex12 (84 aa).

Residues 1–19 (MNSLLMITTCLILVGTVWA) form the signal peptide. The LCN-type CS-alpha/beta domain occupies 20–83 (NDGYLFDKRK…ISRTPGKTCR (64 aa)). 4 disulfide bridges follow: Cys-31–Cys-82, Cys-35–Cys-58, Cys-44–Cys-63, and Cys-48–Cys-65.

The protein belongs to the long (4 C-C) scorpion toxin superfamily. Sodium channel inhibitor family. Beta subfamily. As to expression, expressed by the venom gland.

The protein resides in the secreted. In terms of biological role, beta toxins bind voltage-independently at site-4 of sodium channels (Nav) and shift the voltage of activation toward more negative potentials thereby affecting sodium channel activation and promoting spontaneous and repetitive firing. This Centruroides exilicauda (Bark scorpion) protein is Toxin Cex12.